The sequence spans 149 residues: Protein RhiC (149 aa).

Positions 1-23 are cleaved as a signal peptide; it reads MTATLRAFGWLAAFALTVTFAQG.

The protein resides in the periplasm. Functionally, may be involved in plant-microbe interaction. This is Protein RhiC (rhiC) from Rhizobium leguminosarum bv. viciae.